A 726-amino-acid chain; its full sequence is Beta-adducin (726 aa).

The segment at 1 to 25 (MSEETVPEAASPPPPQGQPYFDRFS) is disordered. A phosphoserine mark is found at S11 and S25. T55 bears the Phosphothreonine; by PKA mark. Phosphoserine occurs at positions 60 and 344. The segment at 425–444 (KQQKEKTRWLNTPNTYLRVN) is interaction with calmodulin. The disordered stretch occupies residues 525-726 (AEKSRSPSTE…KSKKKEKVES (202 aa)). Residues S530 and S532 each carry the phosphoserine modification. T533 carries the phosphothreonine modification. S535 carries the phosphoserine modification. Positions 566–586 (EEYKKEVERKKLELDGEKETA) are enriched in basic and acidic residues. Residues 588–606 (EEPGSPAKSAPASPVQSPA) are compositionally biased toward low complexity. Phosphoserine is present on residues S592, S596, S600, and S604. T611 carries the phosphothreonine modification. Phosphoserine occurs at positions 613, 617, 619, and 621. The segment covering 621–631 (SLEEGTKKTET) has biased composition (basic and acidic residues). Residues 632–645 (SKAATTEPETTQPE) show a composition bias toward low complexity. The segment covering 665–674 (GLSQMTTSAD) has biased composition (polar residues). T675 bears the Phosphothreonine mark. Phosphoserine is present on residues S686, S689, S693, S697, S699, and S701. A compositionally biased stretch (low complexity) spans 689 to 701 (SGPMSPEGSPSKS). Over residues 702–726 (PSKKKKKFRTPSFLKKSKKKEKVES) the composition is skewed to basic residues. Residue S703 is modified to Phosphoserine; by PKC. The tract at residues 704–721 (KKKKKFRTPSFLKKSKKK) is interaction with calmodulin. S713 is modified (phosphoserine; by PKA and PKC).

Belongs to the aldolase class II family. Adducin subfamily. As to quaternary structure, heterodimer of an alpha and a beta subunit. Found in a complex with ADD2, DMTN and SLC2A1. Interacts with SLC2A1. The N-terminus is blocked. Expressed mainly in brain, spleen, kidney cortex and medulla, and heart. Also expressed in human umbilical vein endothelial cells, human vascular smooth muscle cells, kidney tubular cells and K-562 cell line.

The protein localises to the cytoplasm. It is found in the cytoskeleton. Its subcellular location is the cell membrane. Membrane-cytoskeleton-associated protein that promotes the assembly of the spectrin-actin network. Binds to the erythrocyte membrane receptor SLC2A1/GLUT1 and may therefore provide a link between the spectrin cytoskeleton to the plasma membrane. Binds to calmodulin. Calmodulin binds preferentially to the beta subunit. This is Beta-adducin (ADD2) from Homo sapiens (Human).